The primary structure comprises 402 residues: Choline dehydrogenase (402 aa).

The protein belongs to the iron-containing alcohol dehydrogenase family.

The enzyme catalyses choline + NAD(+) = betaine aldehyde + NADH + H(+). The protein operates within amine and polyamine biosynthesis; betaine biosynthesis via choline pathway; betaine aldehyde from choline (dehydrogenase route): step 1/1. Functionally, involved in the biosynthesis of the osmoprotectant glycine betaine from choline. This Bacillus subtilis (strain 168) protein is Choline dehydrogenase.